The primary structure comprises 131 residues: Serum amyloid A-3 protein (131 aa).

Positions 1–18 are cleaved as a signal peptide; sequence MNLSTGIIFCFLILGVSS. Basic and acidic residues predominate over residues 94 to 105; that stretch reads MTRDQVREDSKA. The disordered stretch occupies residues 94-131; sequence MTRDQVREDSKADQFANEWGRSGKDPNHFRPAGLPDKY.

Belongs to the SAA family. As to expression, expressed in the liver. Expressed in mammary epithelial cells. Expressed at high levels in mammary ductal cells and vesicle engorged alveoli, but absent from stromal and connective tissue and leukocytes. Secreted into colostrum and mastitic milk (at protein level). Low expression levels, if any, in normal milk (at protein level).

The protein localises to the secreted. In terms of biological role, major acute phase reactant. Apolipoprotein of the HDL complex. May have a role in protection of the mammary gland during remodeling and infection. In vitro exhibits antimicrobial activity against Escherichia coli, Streptococcus uberis and Pseudomonas aeruginosa. This is Serum amyloid A-3 protein (SAA3) from Bos taurus (Bovine).